The chain runs to 666 residues: Adenylylsulfate reductase subunit alpha (666 aa).

Residues 32–35 (GGMG), 60–61 (DK), 67–69 (SGA), Asn78, Ile193, Ser259, Ser417, 461–462 (AD), and Ser472 each bind FAD.

The protein belongs to the FAD-dependent oxidoreductase 2 family. As to quaternary structure, heterodimer composed of AprA and AprB. The heterodimers can dimerize to form heterotetramers. FAD serves as cofactor.

It localises to the cytoplasm. The enzyme catalyses sulfite + A + AMP + 2 H(+) = adenosine 5'-phosphosulfate + AH2. Catalytic subunit of the adenylylsulfate reductase which catalyzes reversibly the reduction of adenosine 5'-phosphosulfate (APS) to sulfite and AMP during dissimilatory sulfate reduction. This is Adenylylsulfate reductase subunit alpha from Megalodesulfovibrio gigas (strain ATCC 19364 / DSM 1382 / NCIMB 9332 / VKM B-1759) (Desulfovibrio gigas).